The sequence spans 457 residues: 3-ketoacyl-CoA thiolase 5, peroxisomal (457 aa).

A peroxisome-targeting transit peptide spans 1-37 (MERAMERQKILLRHLNPVSSSNSSLKHEPSLLSPVNC). Cys137 acts as the Acyl-thioester intermediate in catalysis. Active-site proton acceptor residues include His394 and Cys426.

The protein belongs to the thiolase-like superfamily. Thiolase family. In terms of assembly, homodimer. In terms of tissue distribution, expressed in seedlings and wounded leaves.

The protein resides in the peroxisome. The catalysed reaction is an acyl-CoA + acetyl-CoA = a 3-oxoacyl-CoA + CoA. It participates in lipid metabolism; fatty acid metabolism. In terms of biological role, probably involved in long chain fatty-acid beta-oxidation prior to gluconeogenesis during germination and subsequent seedling growth. Involved in systemic jasmonic acid (JA) biosynthesis after wounding and may be during senescence. The sequence is that of 3-ketoacyl-CoA thiolase 5, peroxisomal (KAT5) from Arabidopsis thaliana (Mouse-ear cress).